The sequence spans 785 residues: Adhesion G-protein coupled receptor G7 (785 aa).

An N-terminal signal peptide occupies residues 1 to 26; sequence MRSCRSCNVRVLVAIVCGLLTGIVLG. Topologically, residues 27–435 are extracellular; it reads LGIWRMVIRI…KYPKSLDILS (409 aa). N-linked (GlcNAc...) asparagine glycans are attached at residues N82, N122, N133, N152, N159, N178, N195, N239, N289, N348, N400, and N408. The GAIN-B domain occupies 271 to 425; the sequence is FSVQKGSSNS…AVLMSFKKDY (155 aa). 2 disulfide bridges follow: C380–C407 and C395–C409. The GPS stretch occupies residues 380 to 425; that stretch reads CVYWNFLINDWDTQGCQKTGNTTEFLRCNCSHTTNFAVLMSFKKDY. Residues 436–456 traverse the membrane as a helical segment; that stretch reads NIGCALSIAGLALTILFQILT. Over 457-465 the chain is Cytoplasmic; sequence RKIRKTSVT. The chain crosses the membrane as a helical span at residues 466–486; it reads WVLVSLCSSMLIFNLLFVFGI. Residues 487 to 523 are Extracellular-facing; sequence ENSNKNLKTSDSDINVKPENNKIPESDTIETPNPSCT. The helical transmembrane segment at 524-544 threads the bilayer; sequence AIAALLHYFLLVTFTWNGLSA. Over 545 to 561 the chain is Cytoplasmic; that stretch reads TQLYFLLIRTMKPLPRH. Residues 562–582 form a helical membrane-spanning segment; it reads FIIFISLVGWGVPAIIVGVTI. At 583–623 the chain is on the extracellular side; it reads GSIYALSGNKRYWELDYRQEEICWLAVPKDNDYARSPLLWS. The helical transmembrane segment at 624-644 threads the bilayer; the sequence is FIIPVTIILITNITIFVIITV. Over 645–668 the chain is Cytoplasmic; that stretch reads KVLWKNNQNLTSTKKVSSLKKVFS. The helical transmembrane segment at 669 to 689 threads the bilayer; it reads TLSIAVVFGVTWILAYAMLIS. The Extracellular segment spans residues 690–694; sequence NDDIR. Residues 695 to 715 form a helical membrane-spanning segment; the sequence is IVFSYIFCLFNTTQGLQIFIL. Residues 716 to 785 are Cytoplasmic-facing; the sequence is YTVRTKVFQS…SGMTEETSLS (70 aa).

Belongs to the G-protein coupled receptor 2 family. Adhesion G-protein coupled receptor (ADGR) subfamily. In terms of tissue distribution, selectively expressed in the intestinal tissues.

Its subcellular location is the membrane. Orphan receptor. The chain is Adhesion G-protein coupled receptor G7 (Adgrg7) from Mus musculus (Mouse).